A 236-amino-acid polypeptide reads, in one-letter code: 2-C-methyl-D-erythritol 4-phosphate cytidylyltransferase (236 aa).

It belongs to the IspD/TarI cytidylyltransferase family. IspD subfamily. Homodimer.

The catalysed reaction is 2-C-methyl-D-erythritol 4-phosphate + CTP + H(+) = 4-CDP-2-C-methyl-D-erythritol + diphosphate. It participates in isoprenoid biosynthesis; isopentenyl diphosphate biosynthesis via DXP pathway; isopentenyl diphosphate from 1-deoxy-D-xylulose 5-phosphate: step 2/6. In terms of biological role, catalyzes the formation of 4-diphosphocytidyl-2-C-methyl-D-erythritol from CTP and 2-C-methyl-D-erythritol 4-phosphate (MEP). In Buchnera aphidicola subsp. Schizaphis graminum (strain Sg), this protein is 2-C-methyl-D-erythritol 4-phosphate cytidylyltransferase.